The following is a 146-amino-acid chain: Hut operon positive regulatory protein (146 aa).

This sequence belongs to the HutP family. Homohexamer.

Antiterminator that binds to cis-acting regulatory sequences on the mRNA in the presence of histidine, thereby suppressing transcription termination and activating the hut operon for histidine utilization. In Bacillus cereus (strain AH820), this protein is Hut operon positive regulatory protein.